Consider the following 272-residue polypeptide: Type III pantothenate kinase (272 aa).

6 to 13 (DVRNTHTV) lines the ATP pocket. Position 109–112 (109–112 (GADR)) interacts with substrate. The active-site Proton acceptor is the Asp111. K(+) is bound at residue Asp131. Position 134 (Ser134) interacts with ATP. Substrate is bound at residue Thr186.

It belongs to the type III pantothenate kinase family. Homodimer. NH4(+) is required as a cofactor. K(+) serves as cofactor.

Its subcellular location is the cytoplasm. It carries out the reaction (R)-pantothenate + ATP = (R)-4'-phosphopantothenate + ADP + H(+). The protein operates within cofactor biosynthesis; coenzyme A biosynthesis; CoA from (R)-pantothenate: step 1/5. Functionally, catalyzes the phosphorylation of pantothenate (Pan), the first step in CoA biosynthesis. This Mycobacterium marinum (strain ATCC BAA-535 / M) protein is Type III pantothenate kinase.